Consider the following 185-residue polypeptide: Proton-translocating ferredoxin:NAD(+) oxidoreductase complex subunit G (185 aa).

The helical transmembrane segment at 14 to 34 threads the bilayer; sequence TKNLTITCFISGIIIAAVYYI. An FMN phosphoryl threonine modification is found at T161.

The protein belongs to the RnfG family. In terms of assembly, the complex is composed of six subunits: RnfA, RnfB, RnfC, RnfD, RnfE and RnfG. FMN is required as a cofactor.

It localises to the cell membrane. Functionally, part of a membrane-bound complex that couples electron transfer with translocation of ions across the membrane. Couples electron transfer from reduced ferredoxin to NAD(+) with translocation of H(+) out of the cell. Essential for energy conservation during autotrophic growth. Contributes to ATP synthesis during heterotrophic growth. The chain is Proton-translocating ferredoxin:NAD(+) oxidoreductase complex subunit G from Clostridium ljungdahlii (strain ATCC 55383 / DSM 13528 / PETC).